A 99-amino-acid polypeptide reads, in one-letter code: Transcriptional repressor PagR (99 aa).

The 91-residue stretch at Ile9–Gln99 folds into the HTH arsR-type domain. Residues Asn43–Leu62 constitute a DNA-binding region (H-T-H motif).

Functionally, represses the expression of the pagA and atxA genes. The sequence is that of Transcriptional repressor PagR (pagR) from Bacillus anthracis.